Reading from the N-terminus, the 387-residue chain is 3-ketoacyl-CoA thiolase (387 aa).

The Acyl-thioester intermediate role is filled by C91. Catalysis depends on proton acceptor residues H343 and C373.

The protein belongs to the thiolase-like superfamily. Thiolase family. Heterotetramer of two alpha chains (FadB) and two beta chains (FadA).

It is found in the cytoplasm. It catalyses the reaction an acyl-CoA + acetyl-CoA = a 3-oxoacyl-CoA + CoA. It functions in the pathway lipid metabolism; fatty acid beta-oxidation. In terms of biological role, catalyzes the final step of fatty acid oxidation in which acetyl-CoA is released and the CoA ester of a fatty acid two carbons shorter is formed. This Idiomarina loihiensis (strain ATCC BAA-735 / DSM 15497 / L2-TR) protein is 3-ketoacyl-CoA thiolase.